Here is a 97-residue protein sequence, read N- to C-terminus: Large ribosomal subunit protein uL23 (97 aa).

This sequence belongs to the universal ribosomal protein uL23 family. In terms of assembly, part of the 50S ribosomal subunit. Contacts protein L29, and trigger factor when it is bound to the ribosome.

In terms of biological role, one of the early assembly proteins it binds 23S rRNA. One of the proteins that surrounds the polypeptide exit tunnel on the outside of the ribosome. Forms the main docking site for trigger factor binding to the ribosome. The polypeptide is Large ribosomal subunit protein uL23 (Brachyspira hyodysenteriae (strain ATCC 49526 / WA1)).